Consider the following 670-residue polypeptide: UvrABC system protein B (670 aa).

The Helicase ATP-binding domain occupies 25–412 (EGLEAGLSHQ…AGRVIEQVVR (388 aa)). Residue 38–45 (GVTGSGKT) coordinates ATP. Positions 91–114 (YYDYYQPEAYVPSSDTYIEKDSSI) match the Beta-hairpin motif. A Helicase C-terminal domain is found at 429–582 (QVDDLLSQIR…QIAFNEAHGI (154 aa)). A UVR domain is found at 631–666 (SKRIRQLEEKMYQLARDLEFEAAAQLRDEIQTLRER).

This sequence belongs to the UvrB family. As to quaternary structure, forms a heterotetramer with UvrA during the search for lesions. Interacts with UvrC in an incision complex.

It localises to the cytoplasm. In terms of biological role, the UvrABC repair system catalyzes the recognition and processing of DNA lesions. A damage recognition complex composed of 2 UvrA and 2 UvrB subunits scans DNA for abnormalities. Upon binding of the UvrA(2)B(2) complex to a putative damaged site, the DNA wraps around one UvrB monomer. DNA wrap is dependent on ATP binding by UvrB and probably causes local melting of the DNA helix, facilitating insertion of UvrB beta-hairpin between the DNA strands. Then UvrB probes one DNA strand for the presence of a lesion. If a lesion is found the UvrA subunits dissociate and the UvrB-DNA preincision complex is formed. This complex is subsequently bound by UvrC and the second UvrB is released. If no lesion is found, the DNA wraps around the other UvrB subunit that will check the other stand for damage. The sequence is that of UvrABC system protein B from Pseudomonas aeruginosa (strain ATCC 15692 / DSM 22644 / CIP 104116 / JCM 14847 / LMG 12228 / 1C / PRS 101 / PAO1).